Consider the following 360-residue polypeptide: Glycerol-1-phosphate dehydrogenase [NAD(P)+] (360 aa).

NAD(+)-binding positions include 108–112 (GRVID) and 130–133 (TAAS). Asp135 is a binding site for substrate. Ser139 serves as a coordination point for NAD(+). Residue Asp182 participates in substrate binding. 2 residues coordinate Zn(2+): Asp182 and His262. Residue His266 participates in substrate binding. His278 is a binding site for Zn(2+).

The protein belongs to the glycerol-1-phosphate dehydrogenase family. It depends on Zn(2+) as a cofactor.

It localises to the cytoplasm. It catalyses the reaction sn-glycerol 1-phosphate + NAD(+) = dihydroxyacetone phosphate + NADH + H(+). The catalysed reaction is sn-glycerol 1-phosphate + NADP(+) = dihydroxyacetone phosphate + NADPH + H(+). It participates in membrane lipid metabolism; glycerophospholipid metabolism. Functionally, catalyzes the NAD(P)H-dependent reduction of dihydroxyacetonephosphate (DHAP or glycerone phosphate) to glycerol 1-phosphate (G1P). The G1P thus generated is used as the glycerophosphate backbone of phospholipids in the cellular membranes of Archaea. The protein is Glycerol-1-phosphate dehydrogenase [NAD(P)+] of Methanoculleus marisnigri (strain ATCC 35101 / DSM 1498 / JR1).